A 175-amino-acid polypeptide reads, in one-letter code: ATP synthase subunit b (175 aa).

A helical membrane pass occupies residues 24–44; the sequence is LVLWQIAATVILIIVVRIFLW.

The protein belongs to the ATPase B chain family. In terms of assembly, F-type ATPases have 2 components, F(1) - the catalytic core - and F(0) - the membrane proton channel. F(1) has five subunits: alpha(3), beta(3), gamma(1), delta(1), epsilon(1). F(0) has three main subunits: a(1), b(2) and c(10-14). The alpha and beta chains form an alternating ring which encloses part of the gamma chain. F(1) is attached to F(0) by a central stalk formed by the gamma and epsilon chains, while a peripheral stalk is formed by the delta and b chains.

Its subcellular location is the cell membrane. Its function is as follows. F(1)F(0) ATP synthase produces ATP from ADP in the presence of a proton or sodium gradient. F-type ATPases consist of two structural domains, F(1) containing the extramembraneous catalytic core and F(0) containing the membrane proton channel, linked together by a central stalk and a peripheral stalk. During catalysis, ATP synthesis in the catalytic domain of F(1) is coupled via a rotary mechanism of the central stalk subunits to proton translocation. In terms of biological role, component of the F(0) channel, it forms part of the peripheral stalk, linking F(1) to F(0). The sequence is that of ATP synthase subunit b from Acholeplasma laidlawii (strain PG-8A).